The chain runs to 116 residues: Large ribosomal subunit protein bL19 (116 aa).

This sequence belongs to the bacterial ribosomal protein bL19 family.

In terms of biological role, this protein is located at the 30S-50S ribosomal subunit interface and may play a role in the structure and function of the aminoacyl-tRNA binding site. This chain is Large ribosomal subunit protein bL19, found in Streptomyces avermitilis (strain ATCC 31267 / DSM 46492 / JCM 5070 / NBRC 14893 / NCIMB 12804 / NRRL 8165 / MA-4680).